Consider the following 125-residue polypeptide: Large ribosomal subunit protein bL12 (125 aa).

Belongs to the bacterial ribosomal protein bL12 family. In terms of assembly, homodimer. Part of the ribosomal stalk of the 50S ribosomal subunit. Forms a multimeric L10(L12)X complex, where L10 forms an elongated spine to which 2 to 4 L12 dimers bind in a sequential fashion. Binds GTP-bound translation factors.

In terms of biological role, forms part of the ribosomal stalk which helps the ribosome interact with GTP-bound translation factors. Is thus essential for accurate translation. The polypeptide is Large ribosomal subunit protein bL12 (Francisella tularensis subsp. tularensis (strain SCHU S4 / Schu 4)).